Here is a 185-residue protein sequence, read N- to C-terminus: uncharacterized protein (185 aa).

The N-terminal stretch at 1-29 (MKNQEIIEVKSKMFLRIWAFVGSAGMGLA) is a signal peptide. A lipid anchor (N-palmitoyl cysteine) is attached at Cys30. Cys30 carries S-diacylglycerol cysteine lipidation. Residues 45-67 (YLLAIPAGFLFTLFCLYLFIIFF) form a helical membrane-spanning segment.

To B.subtilis YfjE.

Its subcellular location is the cell membrane. This is an uncharacterized protein from Bacillus subtilis (strain 168).